Consider the following 338-residue polypeptide: Ketol-acid reductoisomerase (NADP(+)) (338 aa).

Residues 1-181 form the KARI N-terminal Rossmann domain; the sequence is MNVFYDKDAD…GGGRAGIIET (181 aa). Residues 24–27, Arg47, and Ser52 each bind NADP(+); that span reads YGSQ. His107 is an active-site residue. Position 133 (Gly133) interacts with NADP(+). The KARI C-terminal knotted domain maps to 182–327; that stretch reads NFREETETDL…AKLRAMMPWI (146 aa). 4 residues coordinate Mg(2+): Asp190, Glu194, Glu226, and Glu230. Substrate is bound at residue Ser251.

The protein belongs to the ketol-acid reductoisomerase family. The cofactor is Mg(2+).

It catalyses the reaction (2R)-2,3-dihydroxy-3-methylbutanoate + NADP(+) = (2S)-2-acetolactate + NADPH + H(+). The catalysed reaction is (2R,3R)-2,3-dihydroxy-3-methylpentanoate + NADP(+) = (S)-2-ethyl-2-hydroxy-3-oxobutanoate + NADPH + H(+). Its pathway is amino-acid biosynthesis; L-isoleucine biosynthesis; L-isoleucine from 2-oxobutanoate: step 2/4. It functions in the pathway amino-acid biosynthesis; L-valine biosynthesis; L-valine from pyruvate: step 2/4. Its function is as follows. Involved in the biosynthesis of branched-chain amino acids (BCAA). Catalyzes an alkyl-migration followed by a ketol-acid reduction of (S)-2-acetolactate (S2AL) to yield (R)-2,3-dihydroxy-isovalerate. In the isomerase reaction, S2AL is rearranged via a Mg-dependent methyl migration to produce 3-hydroxy-3-methyl-2-ketobutyrate (HMKB). In the reductase reaction, this 2-ketoacid undergoes a metal-dependent reduction by NADPH to yield (R)-2,3-dihydroxy-isovalerate. The chain is Ketol-acid reductoisomerase (NADP(+)) from Burkholderia cenocepacia (strain HI2424).